A 43-amino-acid polypeptide reads, in one-letter code: LLRRKSHDHAQNHDGDKCLRGASLGYYQSFLNQYKPQCILNKP.

Residues Leu-1–Pro-43 enclose the Peptidase M12B domain. His-13 is a binding site for Zn(2+).

Belongs to the venom metalloproteinase (M12B) family. P-I subfamily. Monomer. Requires Zn(2+) as cofactor. This protein autoproteolytically degrades to 10 kDa and 14 kDa fragments in the presence of SDS. Interestingly, the two fragments, as well as reduced crotalin are able to bind vWF, indicating that the binding activity does not require a specific protein conformation. Expressed by the venom gland.

The protein localises to the secreted. In terms of biological role, snake venom zinc metalloproteinase that inhibits ristocin-induced platelet aggregation by abolishing the binding of von Willebrand factor (vWF) to platelet glycoprotein Ib alpha (GPIBA) through the cleavage of both GP1BA and vWF. Also has fibrinogenolytic activities by degrading the alpha- (FGA) and beta-chain (FGB) of fibrinogen. In vivo, induces a slight hemorrhage when applied to chick chorioallantoic membrane and has potent antithrombic effect. This Crotalus atrox (Western diamondback rattlesnake) protein is Snake venom metalloproteinase crotalin.